We begin with the raw amino-acid sequence, 208 residues long: Probable thymidylate kinase (208 aa).

9–16 (GIDGAGKS) contacts ATP.

Belongs to the thymidylate kinase family.

The catalysed reaction is dTMP + ATP = dTDP + ADP. The sequence is that of Probable thymidylate kinase from Thermococcus gammatolerans (strain DSM 15229 / JCM 11827 / EJ3).